The following is a 512-amino-acid chain: uncharacterized protein (512 aa).

This is an uncharacterized protein from Methanocaldococcus jannaschii (strain ATCC 43067 / DSM 2661 / JAL-1 / JCM 10045 / NBRC 100440) (Methanococcus jannaschii).